We begin with the raw amino-acid sequence, 407 residues long: Arginine deiminase (407 aa).

The active-site Amidino-cysteine intermediate is C397.

It belongs to the arginine deiminase family.

Its subcellular location is the cytoplasm. It carries out the reaction L-arginine + H2O = L-citrulline + NH4(+). It functions in the pathway amino-acid degradation; L-arginine degradation via ADI pathway; carbamoyl phosphate from L-arginine: step 1/2. In Pediococcus pentosaceus (strain ATCC 25745 / CCUG 21536 / LMG 10740 / 183-1w), this protein is Arginine deiminase.